An 835-amino-acid polypeptide reads, in one-letter code: Invasin (835 aa).

The region spanning Val-451–Ala-541 is the Big-1 domain.

Belongs to the intimin/invasin family.

The protein localises to the cell outer membrane. Its function is as follows. Invasin is a protein that allows enteric bacteria to penetrate cultured mammalian cells. The entry of invasin in the cell is mediated by binding several beta-1 chain integrins. This is Invasin from Yersinia enterocolitica.